A 209-amino-acid chain; its full sequence is MDADGSTTDASQLGITGDYIGGGHYVLQSSDGDAEGSLASGDHDESCGSKDPYREQDIYLPIANVARIMKTSIPSSGKIAKDAKECVQECVSEFISFITSEASERCHQEKRKTINGEDILFAMSTLGFDSYVEPLKQYLQKYRESMKGEKGINATVVTTTDAIPEELTEESFSGPLATSIITADGQQQNVMVYTTAYQQIPGVQPIQFT.

An a domain region spans residues 1 to 53 (MDADGSTTDASQLGITGDYIGGGHYVLQSSDGDAEGSLASGDHDESCGSKDPY). Positions 31 to 52 (DGDAEGSLASGDHDESCGSKDP) are disordered. Residues 41-52 (GDHDESCGSKDP) are compositionally biased toward basic and acidic residues. The interval 54–143 (REQDIYLPIA…PLKQYLQKYR (90 aa)) is b domain. The DNA-binding element occupies 60–66 (LPIANVA). A subunit association domain (SAD) region spans residues 87–98 (VQECVSEFISFI). The tract at residues 144-209 (ESMKGEKGIN…IPGVQPIQFT (66 aa)) is c domain.

Belongs to the NFYB/HAP3 subunit family. In terms of assembly, heterotrimeric transcription factor composed of three components, NF-YA, NF-YB and NF-YC. NF-YB and NF-YC must interact and dimerize for NF-YA association and DNA binding.

It is found in the nucleus. Its function is as follows. Component of the sequence-specific heterotrimeric transcription factor (NF-Y) which specifically recognizes a 5'-CCAAT-3' box motif found in the promoters of its target genes. NF-Y can function as both an activator and a repressor, depending on its interacting cofactors. This Petromyzon marinus (Sea lamprey) protein is Nuclear transcription factor Y subunit beta (NFYB).